A 560-amino-acid polypeptide reads, in one-letter code: Eukaryotic translation initiation factor 3 subunit D-1 (560 aa).

Residues 98–166 (VQKPPHQRGR…RGPPPKMRES (69 aa)) are disordered. Basic residues predominate over residues 100–121 (KPPHQRGRFRNMRNSRSGRGRN). Position 128 is a phosphothreonine (Thr128). Over residues 147 to 156 (GRGMGKKFGH) the composition is skewed to basic residues. The segment at 291 to 305 (EFDLLTVNESSVEPP) is RNA gate.

It belongs to the eIF-3 subunit D family. Component of the eukaryotic translation initiation factor 3 (eIF-3) complex. The eIF-3 complex interacts with pix.

Its subcellular location is the cytoplasm. MRNA cap-binding component of the eukaryotic translation initiation factor 3 (eIF-3) complex, which is involved in protein synthesis of a specialized repertoire of mRNAs and, together with other initiation factors, stimulates binding of mRNA and methionyl-tRNAi to the 40S ribosome. The eIF-3 complex specifically targets and initiates translation of a subset of mRNAs involved in cell proliferation. In the eIF-3 complex, eif3d specifically recognizes and binds the 7-methylguanosine cap of a subset of mRNAs. This chain is Eukaryotic translation initiation factor 3 subunit D-1, found in Drosophila melanogaster (Fruit fly).